The sequence spans 870 residues: MVTADETVLATTTNTTSMSVEPTDPRSAGESSSDSEPDTIEQLKAEQREVMADAANGSEVNGNQENGKEEAASADVEVIEIDDTEESTDPSPDGSDENGDAASTSVPIEEEARKKDEGASEVTVASSEIEQDDDGDVMEITEEPNGKSEDTANGTVTEEVLDEEEPEPSVNGTTEIATEKEPEDSSMPVEQNGKGVKRPVECIELDDDDDDEIQEISTPAPAKKAKIDDVKATSVPEEDNNEQAQKRLLDKLEEYVKEQKDQPSSKSRKVLDTLLGAINAQVQKEPLSVRKLILDKVLVLPNTISFPPSQVCDLLIEHDPEMPLTKVINRMFGEERPKLSDSEKRERAQLKQHNPVPNMTKLLVDIGQDLVQEATYCDIVHAKNLPEVPKNLETYKQVAAQLKPVWETLKRKNEPYKLKMHRCDVCGFQTESKLVMSTHKENLHFTGSKFQCTMCKETDTSEQRMKDHYFETHLVIAKSEEKESKYPCAICEEDFNFKGVREQHYKQCKKDYIRIRNIMMPKQDDHLYINRWLWERPQLDPSILQQQQQAALQQAQQKKQQQLLHQQQAAQAAAAAQLLRKQQLQQQQQQQQARLREQQQAAQFRQVAQLLQQQSAQAQRAQQNQGNVNHNTLIAAMQASLRRGGQQGNSLAVSQLLQKQMAALKSQQGAQQLQAAVNSMRSQNSQKTPTHRSSKLVTTPSHATVGSSSAPTFVCEICDASVQEKEKYLQHLQTTHKQMVGKVLQDMSQGAPLACSRCRDRFWTYEGLERHLVMSHGLVTADLLLKAQKKEDGGRCKTCGKNYAFNMLQHLVADHQVKLCSAEIMYSCDVCAFKCSSYQTLEAHLTSNHPKGDKKTSTPAKKDDCITLDD.

Positions 1-244 (MVTADETVLA…VPEEDNNEQA (244 aa)) are disordered. A compositionally biased stretch (polar residues) spans 9-20 (LATTTNTTSMSV). Residues 41–51 (EQLKAEQREVM) show a composition bias toward basic and acidic residues. Acidic residues-rich tracts occupy residues 77-99 (EVIE…DENG), 129-142 (IEQD…EITE), and 203-214 (IELDDDDDDEIQ). 2 consecutive C2H2-type zinc fingers follow at residues 421 to 444 (HRCD…ENLH) and 450 to 473 (FQCT…FETH). The CCHC-type zinc-finger motif lies at 486-508 (YPCAICEEDFNFKGVREQHYKQC). Composition is skewed to polar residues over residues 673–688 (LQAA…SQKT) and 695–708 (KLVT…VGSS). Residues 673-708 (LQAAVNSMRSQNSQKTPTHRSSKLVTTPSHATVGSS) are disordered. 4 C2H2-type zinc fingers span residues 713 to 736 (FVCE…QTTH), 753 to 776 (LACS…VMSH), 794 to 815 (GRCK…VADH), and 826 to 849 (YSCD…TSNH). Positions 847–870 (SNHPKGDKKTSTPAKKDDCITLDD) are disordered. A compositionally biased stretch (basic and acidic residues) spans 850 to 870 (PKGDKKTSTPAKKDDCITLDD).

As to quaternary structure, interacts with hda-1, let-418, lin-1, mog-1, mog-4, mog-5, mog-6, pie-1 and unc-98. In terms of processing, sumoylated. In terms of tissue distribution, expressed in somatic cells of embryos, the head, hypodermis and tail of larvae and the germline of adults, including oocytes but not mature sperm and spermatocytes.

The protein localises to the nucleus. In terms of biological role, has a broad role in development, specifically in the genetic pathway SynMuvB that negatively regulates specification of the vulval cell fate. Required for fem-3 3'-UTR-mediated repression in the regulation of the sperm/oocyte switch. Acts by regulating the translation of fem-3 mRNA, by binding to its 3'-UTR. The polypeptide is MOG interacting and ectopic P-granules protein 1 (Caenorhabditis elegans).